The following is a 116-amino-acid chain: Large ribosomal subunit protein bL19 (116 aa).

This sequence belongs to the bacterial ribosomal protein bL19 family.

Functionally, this protein is located at the 30S-50S ribosomal subunit interface and may play a role in the structure and function of the aminoacyl-tRNA binding site. This chain is Large ribosomal subunit protein bL19 (rplS), found in Geobacillus stearothermophilus (Bacillus stearothermophilus).